Reading from the N-terminus, the 473-residue chain is Serine/threonine-protein phosphatase T (473 aa).

TPR repeat units lie at residues 5-38 (ALEL…DSTN), 40-72 (ILYS…DPEY), and 73-106 (AKAY…APSD). The tract at residues 159-472 (KQITKEFVED…MAYANGLLSG (314 aa)) is catalytic. Mn(2+) contacts are provided by Asp-217, His-219, Asp-246, and Asn-278. His-279 functions as the Proton donor/acceptor in the catalytic mechanism. Mn(2+) contacts are provided by His-327 and His-404.

It belongs to the PPP phosphatase family. PP-5 (PP-T) subfamily. Mg(2+) serves as cofactor. Requires Mn(2+) as cofactor.

It localises to the nucleus. It catalyses the reaction O-phospho-L-seryl-[protein] + H2O = L-seryl-[protein] + phosphate. It carries out the reaction O-phospho-L-threonyl-[protein] + H2O = L-threonyl-[protein] + phosphate. Its function is as follows. Protein phosphatase that specifically binds to and dephosphorylates the molecular chaperone Hsp90. Dephosphorylation positively regulates the Hsp90 chaperone machinery. The sequence is that of Serine/threonine-protein phosphatase T (ppt1) from Schizosaccharomyces pombe (strain 972 / ATCC 24843) (Fission yeast).